Reading from the N-terminus, the 536-residue chain is CBS domain-containing protein CBSCBSPB2 (536 aa).

Positions 1–23 (MTTTPTSSGRRSISSIRRTSSAS) are enriched in low complexity. The segment at 1 to 60 (MTTTPTSSGRRSISSIRRTSSASKKPVLQSEESESGSGSINENTSKPDSPLAQPVSDGER) is disordered. CBS domains follow at residues 66–124 (RLSK…LRPE), 132–187 (MTRN…RMEK), 228–287 (VTEN…LSPE), and 295–354 (MTPN…NNSS). The 84-residue stretch at 406 to 489 (VSSFAFKFED…KVLRLHLDFT (84 aa)) folds into the PB1 domain. A helical transmembrane segment spans residues 509 to 529 (VWWQTGVLAGAIVLTSIGLFV).

It localises to the membrane. The polypeptide is CBS domain-containing protein CBSCBSPB2 (CBSCBSPB2) (Arabidopsis thaliana (Mouse-ear cress)).